A 121-amino-acid polypeptide reads, in one-letter code: Ribonuclease P protein component (121 aa).

Belongs to the RnpA family. As to quaternary structure, consists of a catalytic RNA component (M1 or rnpB) and a protein subunit.

The catalysed reaction is Endonucleolytic cleavage of RNA, removing 5'-extranucleotides from tRNA precursor.. In terms of biological role, RNaseP catalyzes the removal of the 5'-leader sequence from pre-tRNA to produce the mature 5'-terminus. It can also cleave other RNA substrates such as 4.5S RNA. The protein component plays an auxiliary but essential role in vivo by binding to the 5'-leader sequence and broadening the substrate specificity of the ribozyme. The protein is Ribonuclease P protein component of Neisseria meningitidis serogroup A / serotype 4A (strain DSM 15465 / Z2491).